A 178-amino-acid chain; its full sequence is Ribosome maturation factor RimM (178 aa).

The region spanning 100-178 (TDGEYYWYQL…EMKVEWDADF (79 aa)) is the PRC barrel domain.

This sequence belongs to the RimM family. In terms of assembly, binds ribosomal protein uS19.

Its subcellular location is the cytoplasm. Its function is as follows. An accessory protein needed during the final step in the assembly of 30S ribosomal subunit, possibly for assembly of the head region. Essential for efficient processing of 16S rRNA. May be needed both before and after RbfA during the maturation of 16S rRNA. It has affinity for free ribosomal 30S subunits but not for 70S ribosomes. The protein is Ribosome maturation factor RimM of Pseudomonas fluorescens (strain SBW25).